Reading from the N-terminus, the 714-residue chain is DNA ligase (714 aa).

NAD(+)-binding positions include 40 to 44 (DADYD), 90 to 91 (SL), and Glu-124. Lys-126 (N6-AMP-lysine intermediate) is an active-site residue. Residues Arg-147, Glu-183, Lys-304, and Lys-328 each contribute to the NAD(+) site. Zn(2+) contacts are provided by Cys-420, Cys-423, Cys-438, and Cys-444. Residues 634-714 (TRDSEVSGKT…EWAAIVAAAG (81 aa)) form the BRCT domain.

This sequence belongs to the NAD-dependent DNA ligase family. LigA subfamily. Mg(2+) serves as cofactor. It depends on Mn(2+) as a cofactor.

It carries out the reaction NAD(+) + (deoxyribonucleotide)n-3'-hydroxyl + 5'-phospho-(deoxyribonucleotide)m = (deoxyribonucleotide)n+m + AMP + beta-nicotinamide D-nucleotide.. Functionally, DNA ligase that catalyzes the formation of phosphodiester linkages between 5'-phosphoryl and 3'-hydroxyl groups in double-stranded DNA using NAD as a coenzyme and as the energy source for the reaction. It is essential for DNA replication and repair of damaged DNA. In Sphingopyxis alaskensis (strain DSM 13593 / LMG 18877 / RB2256) (Sphingomonas alaskensis), this protein is DNA ligase.